The chain runs to 489 residues: Lysine--tRNA ligase (489 aa).

2 residues coordinate Mg(2+): E399 and E406.

This sequence belongs to the class-II aminoacyl-tRNA synthetase family. Homodimer. It depends on Mg(2+) as a cofactor.

Its subcellular location is the cytoplasm. The enzyme catalyses tRNA(Lys) + L-lysine + ATP = L-lysyl-tRNA(Lys) + AMP + diphosphate. The chain is Lysine--tRNA ligase from Malacoplasma penetrans (strain HF-2) (Mycoplasma penetrans).